The sequence spans 331 residues: Isopenicillin N synthase (331 aa).

The isopenicillin N site is built by arginine 87, tyrosine 91, serine 183, and tyrosine 189. Positions 87, 91, 183, 189, 214, and 216 each coordinate N-[(5S)-5-amino-5-carboxypentanoyl]-L-cysteinyl-D-valine. One can recognise a Fe2OG dioxygenase domain in the interval 176-288 (KPDDTLASVV…RQSLPFFVNL (113 aa)). Fe(2+) contacts are provided by histidine 214, aspartate 216, and histidine 270. Arginine 279 is a binding site for 2-oxoglutarate. Residue serine 281 participates in isopenicillin N binding. Serine 281 provides a ligand contact to N-[(5S)-5-amino-5-carboxypentanoyl]-L-cysteinyl-D-valine.

Belongs to the iron/ascorbate-dependent oxidoreductase family. Monomer. Fe(2+) is required as a cofactor.

It localises to the cytoplasm. The protein resides in the cytosol. The catalysed reaction is N-[(5S)-5-amino-5-carboxypentanoyl]-L-cysteinyl-D-valine + O2 = isopenicillin N + 2 H2O. It participates in antibiotic biosynthesis; penicillin G biosynthesis; penicillin G from L-alpha-aminoadipate and L-cysteine and L-valine: step 2/3. Functionally, isopenicillin N synthase; part of the gene cluster that mediates the biosynthesis of penicillin, the world's most important antibiotic. IpnA catalyzes the cyclization of the tripeptide N-[(5S)-5-amino-5-carboxypentanoyl]-L-cysteinyl-D-valine (LLD-ACV or ACV) to form isopenicillin N (IPN) that contains the beta-lactam nucleus. The penicillin biosynthesis occurs via 3 enzymatic steps, the first corresponding to the production of the tripeptide N-[(5S)-5-amino-5-carboxypentanoyl]-L-cysteinyl-D-valine (LLD-ACV or ACV) by the NRPS acvA. The tripeptide ACV is then cyclized to isopenicillin N (IPN) by the isopenicillin N synthase ipnA that forms the beta-lactam nucleus. Finally, the alpha-aminoadipyl side chain is exchanged for phenylacetic acid by the isopenicillin N acyltransferase penDE to yield penicillin in the peroxisomal matrix. The chain is Isopenicillin N synthase from Emericella nidulans (strain FGSC A4 / ATCC 38163 / CBS 112.46 / NRRL 194 / M139) (Aspergillus nidulans).